We begin with the raw amino-acid sequence, 123 residues long: Large ribosomal subunit protein bL12 (123 aa).

This sequence belongs to the bacterial ribosomal protein bL12 family. In terms of assembly, homodimer. Part of the ribosomal stalk of the 50S ribosomal subunit. Forms a multimeric L10(L12)X complex, where L10 forms an elongated spine to which 2 to 4 L12 dimers bind in a sequential fashion. Binds GTP-bound translation factors.

Forms part of the ribosomal stalk which helps the ribosome interact with GTP-bound translation factors. Is thus essential for accurate translation. This Rhodopseudomonas palustris (strain BisA53) protein is Large ribosomal subunit protein bL12.